A 286-amino-acid chain; its full sequence is Single myb histone 5 (286 aa).

The region spanning 1–61 is the HTH myb-type domain; the sequence is MGAPKQRWTS…KWRNMNVIVT (61 aa). Positions 28–57 form a DNA-binding region, H-T-H motif; that stretch reads WRMILNDPELSSTLRYRSNVDLKDKWRNMN. An H15 domain is found at 122–190; it reads SHSRLDNIIM…KVNRKYRIAP (69 aa). Positions 229-277 form a coiled coil; the sequence is EAAAAAAAHAVAEAEAIMAEAEAAAREAEAAEAEARAAQAFAEAAVLTL.

The protein belongs to the histone H1/H5 family. SMH subfamily. Forms a homodimer and heterodimers.

The protein resides in the nucleus. Its subcellular location is the chromosome. The protein localises to the nucleolus. It is found in the telomere. Functionally, binds preferentially double-stranded telomeric repeats, but may also bind to the single telomeric strand. The sequence is that of Single myb histone 5 (SMH5) from Zea mays (Maize).